We begin with the raw amino-acid sequence, 143 residues long: MSHDADDKTYPYRKDDAELRRRLTPLQYEVTQHAATERAFTGEYTDKEDDGIYKCVVCDTPLFESGAKFHSGCGWPSYFKPLNGEVIDEKIDYSHGMVRVEVRCNHCGAHLGHVFEDGPRDKTGLRYCINSAALNFESRPEND.

The MsrB domain maps to 16–139 (DAELRRRLTP…NSAALNFESR (124 aa)). The Zn(2+) site is built by C55, C58, C104, and C107. C128 (nucleophile) is an active-site residue.

Belongs to the MsrB Met sulfoxide reductase family. Zn(2+) is required as a cofactor.

The enzyme catalyses L-methionyl-[protein] + [thioredoxin]-disulfide + H2O = L-methionyl-(R)-S-oxide-[protein] + [thioredoxin]-dithiol. The protein is Peptide methionine sulfoxide reductase MsrB of Burkholderia multivorans (strain ATCC 17616 / 249).